A 131-amino-acid chain; its full sequence is Small ribosomal subunit protein uS11 (131 aa).

Basic residues predominate over residues 1–15 (MAAKTVKKTRRRKER). The disordered stretch occupies residues 1 to 23 (MAAKTVKKTRRRKERKNVEHGAA).

The protein belongs to the universal ribosomal protein uS11 family. As to quaternary structure, part of the 30S ribosomal subunit. Interacts with proteins S7 and S18. Binds to IF-3.

Functionally, located on the platform of the 30S subunit, it bridges several disparate RNA helices of the 16S rRNA. Forms part of the Shine-Dalgarno cleft in the 70S ribosome. The protein is Small ribosomal subunit protein uS11 of Clostridium beijerinckii (strain ATCC 51743 / NCIMB 8052) (Clostridium acetobutylicum).